We begin with the raw amino-acid sequence, 93 residues long: Small ribosomal subunit protein uS19 (93 aa).

Disordered regions lie at residues 1-24 (MPRS…AQNE) and 73-93 (EFAP…GRRR). Basic and acidic residues-rich tracts occupy residues 9 to 21 (PFVD…KVDA) and 81 to 93 (KGHE…GRRR).

It belongs to the universal ribosomal protein uS19 family.

Functionally, protein S19 forms a complex with S13 that binds strongly to the 16S ribosomal RNA. This is Small ribosomal subunit protein uS19 from Kineococcus radiotolerans (strain ATCC BAA-149 / DSM 14245 / SRS30216).